The chain runs to 263 residues: UPF0246 protein Mmar10_0828 (263 aa).

Belongs to the UPF0246 family.

The chain is UPF0246 protein Mmar10_0828 from Maricaulis maris (strain MCS10) (Caulobacter maris).